The sequence spans 202 residues: Translation initiation factor 2 subunit beta (202 aa).

Residues 145–202 (AIEEGGTYELRIDAVGSKGDGIAKIDKYTVFVPGATKGDVVKVKIKKISGNLAFSERA) enclose the TRAM domain.

It belongs to the eIF-2-beta/eIF-5 family. In terms of assembly, heterotrimer composed of an alpha, a beta and a gamma chain.

Its function is as follows. eIF-2 functions in the early steps of protein synthesis by forming a ternary complex with GTP and initiator tRNA. In Methanosarcina mazei (strain ATCC BAA-159 / DSM 3647 / Goe1 / Go1 / JCM 11833 / OCM 88) (Methanosarcina frisia), this protein is Translation initiation factor 2 subunit beta (eif2b).